Reading from the N-terminus, the 130-residue chain is Abscisic acid and environmental stress-inducible protein TAS14 (130 aa).

Positions 1-130 (MAQYGNQDQM…KIKDKIPGMH (130 aa)) are disordered. A compositionally biased stretch (gly residues) spans 27 to 58 (QGTGTGGMMGGTGTGGMMGGTGGEYGTQGMGT). 2 stretches are compositionally biased toward basic and acidic residues: residues 61–73 (HHHEGQQQLRRSD) and 92–130 (KEKIMEKMPGQHEGEYGQTTGEEKKGMMDKIKDKIPGMH).

The protein belongs to the plant dehydrin family.

This is Abscisic acid and environmental stress-inducible protein TAS14 (TAS14) from Solanum lycopersicum (Tomato).